A 38-amino-acid polypeptide reads, in one-letter code: Large ribosomal subunit protein bL36 (38 aa).

It belongs to the bacterial ribosomal protein bL36 family.

The chain is Large ribosomal subunit protein bL36 from Limosilactobacillus fermentum (strain NBRC 3956 / LMG 18251) (Lactobacillus fermentum).